The sequence spans 336 residues: Probable allantoicase 2 (336 aa).

It belongs to the allantoicase family.

It carries out the reaction allantoate + H2O = (S)-ureidoglycolate + urea. It participates in nitrogen metabolism; (S)-allantoin degradation; (S)-ureidoglycolate from allantoate (aminidohydrolase route): step 1/1. This is Probable allantoicase 2 from Burkholderia mallei (strain ATCC 23344).